Here is a 179-residue protein sequence, read N- to C-terminus: Large ribosomal subunit protein uL6 (179 aa).

It belongs to the universal ribosomal protein uL6 family. In terms of assembly, part of the 50S ribosomal subunit.

This protein binds to the 23S rRNA, and is important in its secondary structure. It is located near the subunit interface in the base of the L7/L12 stalk, and near the tRNA binding site of the peptidyltransferase center. In Chloroherpeton thalassium (strain ATCC 35110 / GB-78), this protein is Large ribosomal subunit protein uL6.